Reading from the N-terminus, the 325-residue chain is Sensor histidine kinase YxdK (325 aa).

The Cytoplasmic segment spans residues 1–8 (MKLFLRSH). A helical transmembrane segment spans residues 9-29 (AVLILLFLLQGLFVFFYYWFA). The Extracellular segment spans residues 30–33 (GLHS). Residues 34–54 (FSHLFYILGVQLLILAGYLAY) form a helical membrane-spanning segment. The Cytoplasmic portion of the chain corresponds to 55-325 (RWYKDRGVYH…SVRFSFLTKM (271 aa)). The Histidine kinase domain occupies 118–325 (QWVHQVKTPL…SVRFSFLTKM (208 aa)). H121 is modified (phosphohistidine; by autocatalysis).

The protein resides in the cell membrane. It catalyses the reaction ATP + protein L-histidine = ADP + protein N-phospho-L-histidine.. Its function is as follows. Probable member of the two-component regulatory system YxdK/YxdJ. May activate YxdJ in response to the antibacterial protein LL-37. In Bacillus subtilis (strain 168), this protein is Sensor histidine kinase YxdK (yxdK).